Reading from the N-terminus, the 213-residue chain is Transcription antitermination protein NusB (213 aa).

It belongs to the NusB family.

Involved in transcription antitermination. Required for transcription of ribosomal RNA (rRNA) genes. Binds specifically to the boxA antiterminator sequence of the ribosomal RNA (rrn) operons. In Picosynechococcus sp. (strain ATCC 27264 / PCC 7002 / PR-6) (Agmenellum quadruplicatum), this protein is Transcription antitermination protein NusB.